Reading from the N-terminus, the 807-residue chain is Glycerol-3-phosphate acyltransferase (807 aa).

The HXXXXD motif signature appears at 308-313 (CHRSHM).

The protein belongs to the GPAT/DAPAT family.

The protein resides in the cell inner membrane. The catalysed reaction is sn-glycerol 3-phosphate + an acyl-CoA = a 1-acyl-sn-glycero-3-phosphate + CoA. It participates in phospholipid metabolism; CDP-diacylglycerol biosynthesis; CDP-diacylglycerol from sn-glycerol 3-phosphate: step 1/3. This Shewanella halifaxensis (strain HAW-EB4) protein is Glycerol-3-phosphate acyltransferase.